The chain runs to 526 residues: MTKLSLLPLLTLASAVLAKQDAFQAKCASFGRKIKLPNVHVNFVEYVPGGTNLTLPDNDVTCGASSQVVSADMCRVAMAVDTSKSSQITLEAWFPREYTGRFLSTGNGGLSGCIQYYDLAYTAGLGFATVGANNGHNGTSGKPFYQHPEVIEDFAYRSIHTGVVVGKQLTKMFYKEGFDKSYYLGCSTGGRQGFKSIQKYPNDFDGVVAGAPAFNFVNLISWSIHFYSITGSNTSDTYLSPESWKVVHDEIVRQCDEIDGAKDGIIEDTDLCQPVIETIICKPGASDKTNCITGAQAKTVRNVLSPFYGVNGNLLYPRMQPGSELFASSVVYNGQPFRYSTDWYRYVVYNNPDWDATKWTVEDAAVALAQNPYNIQTWDADISSFQKAGGKVLTYHGMQDQLISSDNSKLYYARVAEEMGLGPEELDDFYRFFPVSGMAHCTGGDGAYGIGNGLRTYNGAEPENNVLMAMVQWVEKGIAPEFIRGAKFSNGVGSSVEYTRKHCRYPRRNVYKGPGNYSDENAWECV.

Positions M1–A18 are cleaved as a signal peptide. Intrachain disulfides connect C27–C74 and C62–C113. N52 carries N-linked (GlcNAc...) asparagine glycosylation. N-linked (GlcNAc...) asparagine glycosylation occurs at N137. 4 disulfide bridges follow: C186–C441, C255–C272, C281–C291, and C503–C525. S187 (acyl-ester intermediate) is an active-site residue. N233 carries an N-linked (GlcNAc...) asparagine glycan. D256, D259, A261, D263, and I265 together coordinate Ca(2+). Residues D400 and H440 each act as charge relay system in the active site. N-linked (GlcNAc...) asparagine glycosylation is present at N516.

This sequence belongs to the tannase family.

The protein resides in the secreted. The catalysed reaction is feruloyl-polysaccharide + H2O = ferulate + polysaccharide.. Involved in degradation of plant cell walls. Hydrolyzes the feruloyl-arabinose ester bond in arabinoxylans as well as the feruloyl-galactose and feruloyl-arabinose ester bonds in pectin. This is Probable feruloyl esterase B-2 (faeB-2) from Aspergillus fumigatus (strain ATCC MYA-4609 / CBS 101355 / FGSC A1100 / Af293) (Neosartorya fumigata).